A 555-amino-acid chain; its full sequence is Serine/threonine-protein kinase AGC1-7 (555 aa).

The disordered stretch occupies residues 1 to 126 (MLTKPGKKLD…PSKPHTGGDI (126 aa)). Composition is skewed to basic and acidic residues over residues 7-16 (KKLDSSESTH) and 35-54 (PRKE…DNLI). Positions 84–118 (SQSNLNTKPNNNNSNNNSNMSSRSNSIESTSSNPS) are enriched in low complexity. Residues 146–480 (FRLLKRLGYG…ATEIKQHPFF (335 aa)) enclose the Protein kinase domain. Residues 152-160 (LGYGDIGSV) and Lys175 contribute to the ATP site. Asp271 functions as the Proton acceptor in the catalytic mechanism. The 75-residue stretch at 481 to 555 (EGVNWALIRS…DPDYIDFEYF (75 aa)) folds into the AGC-kinase C-terminal domain. A disordered region spans residues 514–547 (AAVDGGGKKNNNGAGGGCSTGGGDNKPNGDCNDP). The span at 526–537 (GAGGGCSTGGGD) shows a compositional bias: gly residues.

It belongs to the protein kinase superfamily. AGC Ser/Thr protein kinase family. As to quaternary structure, interacts with PDPK1/PDK1. Autophosphorylated and phosphorylated by PDPK1/PDK1. As to expression, specifically expressed in pollen grains.

The protein localises to the cytoplasm. The catalysed reaction is L-seryl-[protein] + ATP = O-phospho-L-seryl-[protein] + ADP + H(+). It carries out the reaction L-threonyl-[protein] + ATP = O-phospho-L-threonyl-[protein] + ADP + H(+). Activated by PDPK1/PDK1. Functions redudantly with AGC1-5 as signaling component in the pollen tube. Required for polarized growth of pollen tubes. The polypeptide is Serine/threonine-protein kinase AGC1-7 (Arabidopsis thaliana (Mouse-ear cress)).